The chain runs to 428 residues: Adenylosuccinate synthetase (428 aa).

GTP contacts are provided by residues 12-18 (GDEGKGK) and 40-42 (GHT). Catalysis depends on aspartate 13, which acts as the Proton acceptor. The Mg(2+) site is built by aspartate 13 and glycine 40. Residues 13 to 16 (DEGK), 38 to 41 (NAGH), threonine 128, arginine 142, glutamine 223, threonine 238, and arginine 302 contribute to the IMP site. Catalysis depends on histidine 41, which acts as the Proton donor. 298–304 (VTTGRPR) is a substrate binding site. GTP contacts are provided by residues arginine 304, 330–332 (KLD), and 413–415 (GVG).

The protein belongs to the adenylosuccinate synthetase family. Homodimer. The cofactor is Mg(2+).

It is found in the cytoplasm. The enzyme catalyses IMP + L-aspartate + GTP = N(6)-(1,2-dicarboxyethyl)-AMP + GDP + phosphate + 2 H(+). It participates in purine metabolism; AMP biosynthesis via de novo pathway; AMP from IMP: step 1/2. Its function is as follows. Plays an important role in the de novo pathway of purine nucleotide biosynthesis. Catalyzes the first committed step in the biosynthesis of AMP from IMP. This chain is Adenylosuccinate synthetase, found in Acidothermus cellulolyticus (strain ATCC 43068 / DSM 8971 / 11B).